The following is a 596-amino-acid chain: Ran GTPase-activating protein (596 aa).

6 LRR repeats span residues 44-71 (QTTV…GLKR), 107-134 (GAKL…LLRS), 137-164 (CYSL…ALID), 203-230 (LKTF…SFKH), 231-258 (NPHL…ALPF), and 259-286 (LPLL…ALER). The interval 355-418 (HQEEEDLEDE…EYSNVAEETA (64 aa)) is disordered. The segment covering 387-410 (TTEEADEDSEGDEDDEEDEGDEEY) has biased composition (acidic residues). Phosphothreonine occurs at positions 433 and 434. Position 436 is a phosphoserine (serine 436).

This sequence belongs to the RNA1 family. Forms a complex with Nup358/RanBP2, sbr/Nxf1 and Nxt1. Associates with the nuclear pore complex via its interaction with Nup358/RanBP2. Both full-length and truncated protein are expressed in testis (at protein level). Expressed in oocytes and nurse cells (at protein level).

The protein resides in the cytoplasm. It localises to the nucleus membrane. Functionally, GTPase activator for the nuclear Ras-related regulatory protein Ran, converting it to the putatively inactive GDP-bound state. Trans-acting factor necessary for meiotic distortion. Distortion is only seen in individuals that carry the RanGAP tandem duplication and express a RanGAP truncated protein. Binding of truncated RanGAP product to the Responder(RSP) locus initiates events that lead to sperm dysfunction. During oogenesis, plays a role in the biogenesis of annulate lamellae containing nuclear pore complex components. This is Ran GTPase-activating protein (RanGAP) from Drosophila melanogaster (Fruit fly).